The following is a 137-amino-acid chain: Putative pre-16S rRNA nuclease (137 aa).

This sequence belongs to the YqgF nuclease family.

It localises to the cytoplasm. Functionally, could be a nuclease involved in processing of the 5'-end of pre-16S rRNA. In Desulforamulus reducens (strain ATCC BAA-1160 / DSM 100696 / MI-1) (Desulfotomaculum reducens), this protein is Putative pre-16S rRNA nuclease.